The sequence spans 131 residues: Increased copper sensitivity protein 3 (131 aa).

2 helical membrane passes run 35–55 (ISVL…IFFS) and 74–94 (IALT…IIAF).

The protein resides in the membrane. The sequence is that of Increased copper sensitivity protein 3 (ICS3) from Saccharomyces cerevisiae (strain ATCC 204508 / S288c) (Baker's yeast).